A 152-amino-acid chain; its full sequence is Cytochrome c-type biogenesis protein CcmE (152 aa).

Residues M1–R8 lie on the Cytoplasmic side of the membrane. Residues L9 to A29 traverse the membrane as a helical; Signal-anchor for type II membrane protein segment. Residues L30 to P152 lie on the Periplasmic side of the membrane. Residues H130 and Y134 each contribute to the heme site. Residues N133 to P152 form a disordered region.

The protein belongs to the CcmE/CycJ family.

Its subcellular location is the cell inner membrane. Functionally, heme chaperone required for the biogenesis of c-type cytochromes. Transiently binds heme delivered by CcmC and transfers the heme to apo-cytochromes in a process facilitated by CcmF and CcmH. The chain is Cytochrome c-type biogenesis protein CcmE from Klebsiella pneumoniae (strain 342).